Here is a 604-residue protein sequence, read N- to C-terminus: MLFRAVLLCAALGLSQAANPCCSNPCQNRGECMSTGFDQYKCDCTRTGFYGENCTTPEFLTRIKLLLKPTPNTVHYILTHFKGVWNIVNNIPFLRSLIMKYVLTSRSYLIDSPPTYNVHYGYKSWEAFSNLSYYTRALPPVADDCPTPMGVKGNKELPDSKEVLEKVLLRREFIPDPQGSNMMFAFFAQHFTHQFFKTDHKRGPGFTRGLGHGVDLNHIYGETLDRQHKLRLFKDGKLKYQVIGGEVYPPTVKDTQVEMIYPPHIPENLQFAVGQEVFGLVPGLMMYATIWLREHNRVCDILKQEHPEWGDEQLFQTSRLILIGETIKIVIEDYVQHLSGYHFKLKFDPELLFNQQFQYQNRIASEFNTLYHWHPLLPDTFNIEDQEYSFKQFLYNNSILLEHGLTQFVESFTRQIAGRVAGGRNVPIAVQAVAKASIDQSREMKYQSLNEYRKRFSLKPYTSFEELTGEKEMAAELKALYSDIDVMELYPALLVEKPRPDAIFGETMVELGAPFSLKGLMGNPICSPQYWKPSTFGGEVGFKIINTASIQSLICNNVKGCPFTSFNVQDPQPTKTATINASASHSRLDDINPTVLIKRRSTEL.

A signal peptide spans 1–17 (MLFRAVLLCAALGLSQA). One can recognise an EGF-like domain in the interval 18-55 (ANPCCSNPCQNRGECMSTGFDQYKCDCTRTGFYGENCT). Intrachain disulfides connect cysteine 21–cysteine 32, cysteine 22–cysteine 145, cysteine 26–cysteine 42, and cysteine 44–cysteine 54. A glycan (N-linked (GlcNAc...) asparagine) is linked at asparagine 53. Residue arginine 106 participates in substrate binding. A glycan (N-linked (GlcNAc...) asparagine) is linked at asparagine 130. Histidine 193 serves as the catalytic Proton acceptor. Substrate is bound at residue tyrosine 341. The For cyclooxygenase activity role is filled by tyrosine 371. Histidine 374 is a binding site for heme b. The N-linked (GlcNAc...) asparagine glycan is linked to asparagine 396. Cysteine 526 carries the S-nitrosocysteine modification. The cysteines at positions 555 and 561 are disulfide-linked. Serine 565 carries the O-acetylserine; by SPHK1 modification. Asparagine 580 is a glycosylation site (N-linked (GlcNAc...) asparagine).

It belongs to the prostaglandin G/H synthase family. In terms of assembly, homodimer. Heme b is required as a cofactor. S-nitrosylation by NOS2 (iNOS) activates enzyme activity. S-nitrosylation may take place on different Cys residues in addition to Cys-526. In terms of processing, acetylated at Ser-565 by SPHK1. During neuroinflammation, acetylation by SPHK1 promotes neuronal secretion of specialized preresolving mediators (SPMs), especially 15-R-lipoxin A4, which results in an increase of phagocytic microglia. As to expression, following colon injury, expressed in the wound bed mesenchyme during the first phase of repair, probably by colonic mesenchymal stem cells (at protein level).

The protein resides in the microsome membrane. Its subcellular location is the endoplasmic reticulum membrane. It is found in the nucleus inner membrane. It localises to the nucleus outer membrane. It carries out the reaction (5Z,8Z,11Z,14Z)-eicosatetraenoate + AH2 + 2 O2 = prostaglandin H2 + A + H2O. The catalysed reaction is (5Z,8Z,11Z,14Z)-eicosatetraenoate + 2 O2 = prostaglandin G2. The enzyme catalyses prostaglandin G2 + AH2 = prostaglandin H2 + A + H2O. It catalyses the reaction (5Z,8Z,11Z,14Z,17Z)-eicosapentaenoate + 2 O2 = prostaglandin G3. It carries out the reaction prostaglandin G3 + AH2 = prostaglandin H3 + A + H2O. The catalysed reaction is (8Z,11Z,14Z)-eicosatrienoate + 2 O2 = prostaglandin G1. The enzyme catalyses prostaglandin G1 + AH2 = prostaglandin H1 + A + H2O. It catalyses the reaction 2-(5Z,8Z,11Z,14Z)-eicosatetraenoyl-sn-glycero-3-phosphoethanolamine + 2 O2 = 2-(prostaglandin G2)-sn-glycero-3-phosphoethanolamine. It carries out the reaction 2-(prostaglandin G2)-sn-glycero-3-phosphoethanolamine + AH2 = 2-(prostaglandin H2)-sn-glycero-3-phosphoethanolamine + A + H2O. The catalysed reaction is 2-(5Z,8Z,11Z,14Z)-eicosatetraenoyl-sn-glycero-3-phosphocholine + 2 O2 = 2-(prostaglandin G2)-sn-glycero-3-phosphocholine. The enzyme catalyses 2-(prostaglandin G2)-sn-glycero-3-phosphocholine + AH2 = 2-(prostaglandin H2)-sn-glycero-3-phosphocholine + A + H2O. It catalyses the reaction (15S)-hydroperoxy-(5Z,8Z,11Z,13E)-eicosatetraenoate + AH2 = (15S)-hydroxy-(5Z,8Z,11Z,13E)-eicosatetraenoate + A + H2O. It carries out the reaction 2-(5Z,8Z,11Z,14Z)-eicosatetraenoyl-sn-glycero-3-phosphocholine + AH2 + O2 = 2-[(15S)-hydroxy-(5Z,8Z,11Z,13E)-eicosatetraenoyl]-sn-glycero-3-phosphocholine + A + H2O. The catalysed reaction is 2-(5Z,8Z,11Z,14Z)-eicosatetraenoyl-sn-glycero-3-phosphocholine + AH2 + O2 = 2-[(15R)-hydroxy-(5Z,8Z,11Z,13E)-eicosatetraenoyl]-sn-glycero-3-phosphocholine + A + H2O. The enzyme catalyses 2-(5Z,8Z,11Z,14Z)-eicosatetraenoyl-sn-glycero-3-phosphocholine + AH2 + O2 = 2-[(11R)-hydroxy-(5Z,8Z,12E,14Z)-eicosatetraenoyl]-sn-glycero-3-phosphocholine + A + H2O. It catalyses the reaction (9Z,12Z)-octadecadienoate + AH2 + O2 = 9-hydroxy-(10E,12Z)-octadecadienoate + A + H2O. It carries out the reaction (9Z,12Z)-octadecadienoate + AH2 + O2 = 13-hydroxy-(9Z,11E)-octadecadienoate + A + H2O. The catalysed reaction is (5Z,8Z,11Z,14Z)-eicosatetraenoate + AH2 + O2 = (15R)-hydroxy-(5Z,8Z,11Z,13E)-eicosatetraenoate + A + H2O. The enzyme catalyses (5Z,8Z,11Z,14Z)-eicosatetraenoate + AH2 + O2 = (11R)-hydroxy-(5Z,8Z,12E,14Z)-eicosatetraenoate + A + H2O. It catalyses the reaction (5Z,8Z,11Z,14Z,17Z)-eicosapentaenoate + AH2 + O2 = (11R)-hydroxy-(5Z,8Z,12E,14Z,17Z)-eicosapentaenoate + A + H2O. It carries out the reaction (5Z,8Z,11Z,14Z,17Z)-eicosapentaenoate + AH2 + O2 = (18S)-hydroxy-(5Z,8Z,11Z,14Z,16E)-eicosapentaenoate + A + H2O. The catalysed reaction is (5Z,8Z,11Z,14Z,17Z)-eicosapentaenoate + AH2 + O2 = (18R)-hydroxy-(5Z,8Z,11Z,14Z,16E)-eicosapentaenoate + A + H2O. The enzyme catalyses (5Z,8Z,11Z,14Z,17Z)-eicosapentaenoate + AH2 + O2 = (15R)-hydroxy-(5Z,8Z,11Z,13E,17Z)-eicosapentaenoate + A + H2O. It catalyses the reaction (5Z,8Z,11Z,14Z,17Z)-eicosapentaenoate + AH2 + O2 = (15S)-hydroxy-(5Z,8Z,11Z,13E,17Z)-eicosapentaenoate + A + H2O. It carries out the reaction (7Z,10Z,13Z,16Z,19Z)-docosapentaenoate + AH2 + O2 = 13R-hydroxy-(7Z,10Z,14E,16Z,19Z)-docosapentaenoate + A + H2O. The catalysed reaction is (4Z,7Z,10Z,13Z,16Z,19Z)-docosahexaenoate + AH2 + O2 = 13-hydroxy-(4Z,7Z,10Z,14E,16Z,19Z)-docosahexaenoate + A + H2O. The enzyme catalyses (5S)-hydroxy-(6E,8Z,11Z,14Z)-eicosatetraenoate + AH2 + O2 = (5S,15R)-dihydroxy-(6E,8Z,11Z,13E)-eicosatetraenoate + A + H2O. It catalyses the reaction (4Z,7Z,10Z,13Z,16Z,19Z)-docosahexaenoate + AH2 + O2 = 17R-hydroxy-(4Z,7Z,10Z,13Z,15E,19Z)-docosahexaenoate + A + H2O. It carries out the reaction (5S)-hydroxy-(6E,8Z,11Z,14Z)-eicosatetraenoate + AH2 + O2 = (5S,15S)-dihydroxy-(6E,8Z,11Z,13E)-eicosatetraenoate + A + H2O. The catalysed reaction is (5S)-hydroxy-(6E,8Z,11Z,14Z)-eicosatetraenoate + AH2 + O2 = (5S,11R)-dihydroxy-(6E,8Z,12E,14Z)-eicosatetraenoate + A + H2O. The enzyme catalyses 2-(5Z,8Z,11Z,14Z-eicosatetraenoyl)-glycerol + 2 O2 = 2-glyceryl-prostaglandin G2. It catalyses the reaction 2-glyceryl-prostaglandin G2 + AH2 = 2-glyceryl-prostaglandin H2 + A + H2O. It carries out the reaction (5Z,8Z,11Z,14Z)-eicosatetraenoate + O2 = (15R)-hydroperoxy-(5Z,8Z,11Z,13E)-eicosatetraenoate. The catalysed reaction is (5Z,8Z,11Z,14Z)-eicosatetraenoate + O2 = 11R-hydroperoxy-(5Z,8Z,12E,14Z)-eicosatetraenoate. The enzyme catalyses (9Z,12Z)-octadecadienoate + AH2 + O2 = (9R)-hydroxy-(10E,12Z)-octadecadienoate + A + H2O. It catalyses the reaction (9Z,12Z)-octadecadienoate + AH2 + O2 = (9S)-hydroxy-(10E,12Z)-octadecadienoate + A + H2O. It carries out the reaction (9Z,12Z)-octadecadienoate + AH2 + O2 = (13S)-hydroxy-(9Z,11E)-octadecadienoate + A + H2O. The catalysed reaction is (9Z,12Z)-octadecadienoate + AH2 + O2 = (13R)-hydroxy-(9Z,11E)-octadecadienoate + A + H2O. The protein operates within lipid metabolism; prostaglandin biosynthesis. Its activity is regulated as follows. Inhibited by the nonsteroidal anti-inflammatory drugs aspirin, naproxen, diclofenac, meclofenamic acid, indomethacin and their analogs. In terms of biological role, dual cyclooxygenase and peroxidase in the biosynthesis pathway of prostanoids, a class of C20 oxylipins mainly derived from arachidonate, with a particular role in the inflammatory response. The cyclooxygenase activity oxygenates arachidonate (AA, C20:4(n-6)) to the hydroperoxy endoperoxide prostaglandin G2 (PGG2), and the peroxidase activity reduces PGG2 to the hydroxy endoperoxide PGH2, the precursor of all 2-series prostaglandins and thromboxanes. This complex transformation is initiated by abstraction of hydrogen at carbon 13 (with S-stereochemistry), followed by insertion of molecular O2 to form the endoperoxide bridge between carbon 9 and 11 that defines prostaglandins. The insertion of a second molecule of O2 (bis-oxygenase activity) yields a hydroperoxy group in PGG2 that is then reduced to PGH2 by two electrons. Similarly catalyzes successive cyclooxygenation and peroxidation of dihomo-gamma-linoleate (DGLA, C20:3(n-6)) and eicosapentaenoate (EPA, C20:5(n-3)) to corresponding PGH1 and PGH3, the precursors of 1- and 3-series prostaglandins. In an alternative pathway of prostanoid biosynthesis, converts 2-arachidonoyl lysophopholipids to prostanoid lysophopholipids, which are then hydrolyzed by intracellular phospholipases to release free prostanoids. Metabolizes 2-arachidonoyl glycerol yielding the glyceryl ester of PGH2, a process that can contribute to pain response. Generates lipid mediators from n-3 and n-6 polyunsaturated fatty acids (PUFAs) via a lipoxygenase-type mechanism. Oxygenates PUFAs to hydroperoxy compounds and then reduces them to corresponding alcohols. Plays a role in the generation of resolution phase interaction products (resolvins) during both sterile and infectious inflammation. Metabolizes docosahexaenoate (DHA, C22:6(n-3)) to 17R-HDHA, a precursor of the D-series resolvins (RvDs). As a component of the biosynthetic pathway of E-series resolvins (RvEs), converts eicosapentaenoate (EPA, C20:5(n-3)) primarily to 18S-HEPE that is further metabolized by ALOX5 and LTA4H to generate 18S-RvE1 and 18S-RvE2. In vascular endothelial cells, converts docosapentaenoate (DPA, C22:5(n-3)) to 13R-HDPA, a precursor for 13-series resolvins (RvTs) shown to activate macrophage phagocytosis during bacterial infection. In activated leukocytes, contributes to oxygenation of hydroxyeicosatetraenoates (HETE) to diHETES (5,15-diHETE and 5,11-diHETE). Can also use linoleate (LA, (9Z,12Z)-octadecadienoate, C18:2(n-6)) as substrate and produce hydroxyoctadecadienoates (HODEs) in a regio- and stereospecific manner, being (9R)-HODE ((9R)-hydroxy-(10E,12Z)-octadecadienoate) and (13S)-HODE ((13S)-hydroxy-(9Z,11E)-octadecadienoate) its major products. During neuroinflammation, plays a role in neuronal secretion of specialized preresolving mediators (SPMs) 15R-lipoxin A4 that regulates phagocytic microglia. The sequence is that of Prostaglandin G/H synthase 2 from Mus musculus (Mouse).